Consider the following 274-residue polypeptide: Triosephosphate isomerase (274 aa).

Substrate is bound at residue 31 to 33; it reads NWK. Residue His118 is the Electrophile of the active site. The Proton acceptor role is filled by Glu188. Substrate contacts are provided by residues Gly194, Ser234, and 255–256; that span reads GG.

This sequence belongs to the triosephosphate isomerase family. In terms of assembly, homodimer.

The protein resides in the cytoplasm. It carries out the reaction D-glyceraldehyde 3-phosphate = dihydroxyacetone phosphate. It participates in carbohydrate biosynthesis; gluconeogenesis. It functions in the pathway carbohydrate degradation; glycolysis; D-glyceraldehyde 3-phosphate from glycerone phosphate: step 1/1. Its function is as follows. Involved in the gluconeogenesis. Catalyzes stereospecifically the conversion of dihydroxyacetone phosphate (DHAP) to D-glyceraldehyde-3-phosphate (G3P). In Chlamydia trachomatis serovar A (strain ATCC VR-571B / DSM 19440 / HAR-13), this protein is Triosephosphate isomerase.